We begin with the raw amino-acid sequence, 191 residues long: Ribonuclease HII (191 aa).

In terms of domain architecture, RNase H type-2 spans 7 to 191 (ILMAGVDEVG…YSPVADLISK (185 aa)). Positions 13, 14, and 103 each coordinate a divalent metal cation.

The protein belongs to the RNase HII family. Mn(2+) serves as cofactor. It depends on Mg(2+) as a cofactor.

It is found in the cytoplasm. The catalysed reaction is Endonucleolytic cleavage to 5'-phosphomonoester.. Its function is as follows. Endonuclease that specifically degrades the RNA of RNA-DNA hybrids. The polypeptide is Ribonuclease HII (Legionella pneumophila (strain Corby)).